Consider the following 550-residue polypeptide: Glucose-6-phosphate isomerase 2 (550 aa).

The active-site Proton donor is E357. Active-site residues include H388 and K514. A disordered region spans residues 527 to 550 (DTGALGHDSSTNGLIRHYRERHGK).

It belongs to the GPI family.

It localises to the cytoplasm. It carries out the reaction alpha-D-glucose 6-phosphate = beta-D-fructose 6-phosphate. The protein operates within carbohydrate biosynthesis; gluconeogenesis. Its pathway is carbohydrate degradation; glycolysis; D-glyceraldehyde 3-phosphate and glycerone phosphate from D-glucose: step 2/4. Catalyzes the reversible isomerization of glucose-6-phosphate to fructose-6-phosphate. In Chromobacterium violaceum (strain ATCC 12472 / DSM 30191 / JCM 1249 / CCUG 213 / NBRC 12614 / NCIMB 9131 / NCTC 9757 / MK), this protein is Glucose-6-phosphate isomerase 2.